The sequence spans 267 residues: Acyl-[acyl-carrier-protein]--UDP-N-acetylglucosamine O-acyltransferase (267 aa).

The protein belongs to the transferase hexapeptide repeat family. LpxA subfamily. Homotrimer.

The protein resides in the cytoplasm. The catalysed reaction is a (3R)-hydroxyacyl-[ACP] + UDP-N-acetyl-alpha-D-glucosamine = a UDP-3-O-[(3R)-3-hydroxyacyl]-N-acetyl-alpha-D-glucosamine + holo-[ACP]. The protein operates within glycolipid biosynthesis; lipid IV(A) biosynthesis; lipid IV(A) from (3R)-3-hydroxytetradecanoyl-[acyl-carrier-protein] and UDP-N-acetyl-alpha-D-glucosamine: step 1/6. Functionally, involved in the biosynthesis of lipid A, a phosphorylated glycolipid that anchors the lipopolysaccharide to the outer membrane of the cell. This chain is Acyl-[acyl-carrier-protein]--UDP-N-acetylglucosamine O-acyltransferase, found in Hamiltonella defensa subsp. Acyrthosiphon pisum (strain 5AT).